The sequence spans 154 residues: Decarboxylase claH (154 aa).

The protein belongs to the tpcK family.

It catalyses the reaction atrochrysone carboxylate + H(+) = atrochrysone + CO2. The protein operates within pigment biosynthesis. Its function is as follows. Decarboxylase involved in the biosynthesis of the bianthraquinone cladofulvin, a conidial pigment not required for virulence but that plays a role in fitness and resistance to environmental stresses including UV light and low-temperature stress. The pathway begins with the synthesis of atrochrysone thioester by the polyketide synthase (PKS) claG. The atrochrysone carboxyl ACP thioesterase claF then breaks the thioester bond and releases the atrochrysone carboxylic acid from claG. This compound is decarboxylated by claH to yield emodin, which is further converted to chrysophanol hydroquinone by the reductase claC and the dehydratase claB. The cytochrome monooxygenase P450 claM then catalyzes the dimerization of nataloe-emodin to cladofulvin. The polypeptide is Decarboxylase claH (Passalora fulva (Tomato leaf mold)).